Here is a 545-residue protein sequence, read N- to C-terminus: ATP synthase F(1) complex subunit alpha, mitochondrial (545 aa).

ATP is bound by residues Gln216, Gly218, Lys219, Thr220, and Ser221. Residue Thr220 coordinates Mg(2+). Asp304 serves as a coordination point for Mg(2+). Positions 465 and 467 each coordinate ATP.

Belongs to the ATPase alpha/beta chains family. As to quaternary structure, homotrimer. Component of the ATP synthase complex composed at least of ATP5F1A/subunit alpha, ATP5F1B/subunit beta, ATP5MC1/subunit c (homooctomer), MT-ATP6/subunit a, MT-ATP8/subunit 8, ATP5ME/subunit e, ATP5MF/subunit f, ATP5MG/subunit g, ATP5MK/subunit k, ATP5MJ/subunit j, ATP5F1C/subunit gamma, ATP5F1D/subunit delta, ATP5F1E/subunit epsilon, ATP5PF/subunit F6, ATP5PB/subunit b, ATP5PD/subunit d, ATP5PO/subunit OSCP. ATP synthase complex consists of a soluble F(1) head domain (subunits alpha(3) and beta(3)) - the catalytic core - and a membrane F(0) domain - the membrane proton channel (subunits c, a, 8, e, f, g, k and j). These two domains are linked by a central stalk (subunits gamma, delta, and epsilon) rotating inside the F1 region and a stationary peripheral stalk (subunits F6, b, d, and OSCP).

It localises to the mitochondrion inner membrane. Subunit alpha, of the mitochondrial membrane ATP synthase complex (F(1)F(0) ATP synthase or Complex V) that produces ATP from ADP in the presence of a proton gradient across the membrane which is generated by electron transport complexes of the respiratory chain. ATP synthase complex consist of a soluble F(1) head domain - the catalytic core - and a membrane F(1) domain - the membrane proton channel. These two domains are linked by a central stalk rotating inside the F(1) region and a stationary peripheral stalk. During catalysis, ATP synthesis in the catalytic domain of F(1) is coupled via a rotary mechanism of the central stalk subunits to proton translocation. In vivo, can only synthesize ATP although its ATP hydrolase activity can be activated artificially in vitro. With the catalytic subunit beta (ATP5F1B), forms the catalytic core in the F(1) domain. Subunit alpha does not bear the catalytic high-affinity ATP-binding sites. This is ATP synthase F(1) complex subunit alpha, mitochondrial from Xenopus laevis (African clawed frog).